Reading from the N-terminus, the 208-residue chain is ATP-dependent Clp protease proteolytic subunit (208 aa).

Ser-98 acts as the Nucleophile in catalysis. His-123 is a catalytic residue.

This sequence belongs to the peptidase S14 family. As to quaternary structure, fourteen ClpP subunits assemble into 2 heptameric rings which stack back to back to give a disk-like structure with a central cavity, resembling the structure of eukaryotic proteasomes.

The protein localises to the cytoplasm. It catalyses the reaction Hydrolysis of proteins to small peptides in the presence of ATP and magnesium. alpha-casein is the usual test substrate. In the absence of ATP, only oligopeptides shorter than five residues are hydrolyzed (such as succinyl-Leu-Tyr-|-NHMec, and Leu-Tyr-Leu-|-Tyr-Trp, in which cleavage of the -Tyr-|-Leu- and -Tyr-|-Trp bonds also occurs).. Cleaves peptides in various proteins in a process that requires ATP hydrolysis. Has a chymotrypsin-like activity. Plays a major role in the degradation of misfolded proteins. In Wolbachia sp. subsp. Brugia malayi (strain TRS), this protein is ATP-dependent Clp protease proteolytic subunit.